The primary structure comprises 164 residues: UPF0225 protein Shewmr4_2054 (164 aa).

It belongs to the UPF0225 family.

The protein is UPF0225 protein Shewmr4_2054 of Shewanella sp. (strain MR-4).